We begin with the raw amino-acid sequence, 276 residues long: Probable D-methionine-binding lipoprotein MetQ (276 aa).

The first 20 residues, 1–20 (MKLTKLFGLATLVSAVALAG), serve as a signal peptide directing secretion. Cysteine 21 carries N-palmitoyl cysteine lipidation. A lipid anchor (S-diacylglycerol cysteine) is attached at cysteine 21.

It belongs to the NlpA lipoprotein family.

It localises to the cell outer membrane. This protein is a component of a D-methionine permease, a binding protein-dependent, ATP-driven transport system. The sequence is that of Probable D-methionine-binding lipoprotein MetQ (metQ) from Pasteurella multocida (strain Pm70).